Reading from the N-terminus, the 499-residue chain is Aspartyl/glutamyl-tRNA(Asn/Gln) amidotransferase subunit B (499 aa).

This sequence belongs to the GatB/GatE family. GatB subfamily. As to quaternary structure, heterotrimer of A, B and C subunits.

It carries out the reaction L-glutamyl-tRNA(Gln) + L-glutamine + ATP + H2O = L-glutaminyl-tRNA(Gln) + L-glutamate + ADP + phosphate + H(+). The catalysed reaction is L-aspartyl-tRNA(Asn) + L-glutamine + ATP + H2O = L-asparaginyl-tRNA(Asn) + L-glutamate + ADP + phosphate + 2 H(+). Allows the formation of correctly charged Asn-tRNA(Asn) or Gln-tRNA(Gln) through the transamidation of misacylated Asp-tRNA(Asn) or Glu-tRNA(Gln) in organisms which lack either or both of asparaginyl-tRNA or glutaminyl-tRNA synthetases. The reaction takes place in the presence of glutamine and ATP through an activated phospho-Asp-tRNA(Asn) or phospho-Glu-tRNA(Gln). The chain is Aspartyl/glutamyl-tRNA(Asn/Gln) amidotransferase subunit B from Bartonella bacilliformis (strain ATCC 35685 / KC583 / Herrer 020/F12,63).